A 345-amino-acid chain; its full sequence is Molybdate/tungstate-binding protein WtpA (345 aa).

The signal sequence occupies residues 1 to 27 (MREGGVMKKRLLALIVAFAVLTAGCLG). Molybdate contacts are provided by residues 41 to 42 (GS), S75, 160 to 162 (DPC), E218, and Y236. Tungstate contacts are provided by residues 41-42 (GS), S75, 160-162 (DPC), E218, and Y236.

This sequence belongs to the bacterial solute-binding protein 1 family. WtpA subfamily. In terms of assembly, monomer. The complex is composed of two ATP-binding proteins (WtpC), two transmembrane proteins (WtpB) and a solute-binding protein (WtpA).

The protein resides in the cell membrane. Its function is as follows. Part of the ABC transporter complex WtpABC involved in molybdate/tungstate import. Binds tungstate and molybdate, with a preference for tungstate. This is Molybdate/tungstate-binding protein WtpA from Pyrococcus furiosus (strain ATCC 43587 / DSM 3638 / JCM 8422 / Vc1).